A 435-amino-acid polypeptide reads, in one-letter code: BAHD acyltransferase BIA1 (435 aa).

Catalysis depends on proton acceptor residues His151 and Asp369.

The protein belongs to the plant acyltransferase family. In terms of tissue distribution, mostly expressed in roots (particularly in the root elongation zone), and, to a lower extent, in seedling, leaves (especially in hydathodes), siliques (e.g. in developing seeds) and flowers.

The protein localises to the cytoplasm. In terms of biological role, monitors brassinosteroids (BR) responses and homeostasis, particularly in the root and hypocotyl in darkness. Promotes flavonoid biosynthesis. This Arabidopsis thaliana (Mouse-ear cress) protein is BAHD acyltransferase BIA1.